A 396-amino-acid polypeptide reads, in one-letter code: Probable sugar efflux transporter (396 aa).

12 helical membrane passes run valine 15 to leucine 35, valine 50 to leucine 70, leucine 81 to phenylalanine 101, valine 103 to alanine 123, alanine 136 to isoleucine 156, threonine 169 to proline 189, proline 209 to tyrosine 229, phenylalanine 246 to glycine 266, leucine 275 to alanine 295, leucine 301 to valine 321, valine 333 to glycine 353, and threonine 364 to phenylalanine 384.

Belongs to the major facilitator superfamily. SotB (TC 2.A.1.2) family.

The protein resides in the cell inner membrane. Its function is as follows. Involved in the efflux of sugars. The physiological role may be the reduction of the intracellular concentration of toxic sugars or sugar metabolites. The polypeptide is Probable sugar efflux transporter (Salmonella arizonae (strain ATCC BAA-731 / CDC346-86 / RSK2980)).